The chain runs to 288 residues: Shikimate dehydrogenase (NADP(+)) (288 aa).

Shikimate is bound by residues 21 to 23 (SLS) and Thr68. Residue Lys72 is the Proton acceptor of the active site. The shikimate site is built by Asn93 and Asp108. NADP(+) contacts are provided by residues 132 to 136 (GNGGA) and Leu230. Tyr232 contributes to the shikimate binding site. Gly253 is an NADP(+) binding site.

This sequence belongs to the shikimate dehydrogenase family. As to quaternary structure, homodimer.

The enzyme catalyses shikimate + NADP(+) = 3-dehydroshikimate + NADPH + H(+). Its pathway is metabolic intermediate biosynthesis; chorismate biosynthesis; chorismate from D-erythrose 4-phosphate and phosphoenolpyruvate: step 4/7. In terms of biological role, involved in the biosynthesis of the chorismate, which leads to the biosynthesis of aromatic amino acids. Catalyzes the reversible NADPH linked reduction of 3-dehydroshikimate (DHSA) to yield shikimate (SA). The protein is Shikimate dehydrogenase (NADP(+)) of Crocosphaera subtropica (strain ATCC 51142 / BH68) (Cyanothece sp. (strain ATCC 51142)).